The following is a 256-amino-acid chain: Undecaprenyl-diphosphatase 2 (256 aa).

8 helical membrane-spanning segments follow: residues 1 to 21, 38 to 58, 70 to 90, 97 to 117, 134 to 154, 175 to 195, 208 to 228, and 236 to 256; these read MDIF…FLPI, ATAT…LAVL, LNLW…AFIF, LFNV…FLLL, VTYK…IPGT, AEFS…YDLL, ALAV…KLFI, and FVSF…IAYV.

Belongs to the UppP family.

The protein localises to the cell inner membrane. The catalysed reaction is di-trans,octa-cis-undecaprenyl diphosphate + H2O = di-trans,octa-cis-undecaprenyl phosphate + phosphate + H(+). In terms of biological role, catalyzes the dephosphorylation of undecaprenyl diphosphate (UPP). Confers resistance to bacitracin. In Pseudoalteromonas translucida (strain TAC 125), this protein is Undecaprenyl-diphosphatase 2.